Reading from the N-terminus, the 308-residue chain is Coenzyme PQQ synthesis protein B (308 aa).

The protein belongs to the PqqB family.

It participates in cofactor biosynthesis; pyrroloquinoline quinone biosynthesis. Functionally, may be involved in the transport of PQQ or its precursor to the periplasm. This Klebsiella pneumoniae subsp. pneumoniae (strain ATCC 700721 / MGH 78578) protein is Coenzyme PQQ synthesis protein B.